We begin with the raw amino-acid sequence, 102 residues long: Serum amyloid A-5 protein (102 aa).

The segment at 68-102 (GRGHEDSMADQEANRWGRSGNDPNHYRPAGLPDKY) is disordered. Residues 69–82 (RGHEDSMADQEANR) show a composition bias toward basic and acidic residues.

The protein belongs to the SAA family. In terms of tissue distribution, expressed by the liver; secreted in plasma.

It is found in the secreted. Major acute phase reactant. Apolipoprotein of the HDL complex. The polypeptide is Serum amyloid A-5 protein (Mesocricetus auratus (Golden hamster)).